The sequence spans 244 residues: Tetraspanin-7 (244 aa).

Over 1–11 (METKPVITCLK) the chain is Cytoplasmic. The chain crosses the membrane as a helical span at residues 12 to 35 (TLLIIYSFVFWITGVILLAVGVWG). Residues 36-51 (KLTLGTYISLIAENST) are Extracellular-facing. N-linked (GlcNAc...) asparagine glycosylation is present at N49. Residues 52 to 70 (NAPYVLIGTGTTIVVFGLF) form a helical membrane-spanning segment. The Cytoplasmic segment spans residues 71–81 (GCFATCRGSPW). The chain crosses the membrane as a helical span at residues 82–107 (MLKLYAMFLSLVFLAELVAGISGFVF). Residues 108–208 (RHEIKDTFLR…LVTSFMETNM (101 aa)) are Extracellular-facing. N150, N153, N172, and N183 each carry an N-linked (GlcNAc...) asparagine glycan. The chain crosses the membrane as a helical span at residues 209–229 (GIIAGVAFGIAFSQLIGMLLA). Residues 230–244 (CCLSRFITANQYEMV) lie on the Cytoplasmic side of the membrane.

It belongs to the tetraspanin (TM4SF) family.

It localises to the membrane. In terms of biological role, may be involved in cell proliferation and cell motility. This is Tetraspanin-7 (TSPAN7) from Pongo pygmaeus (Bornean orangutan).